The primary structure comprises 237 residues: Phosphoribosylaminoimidazole-succinocarboxamide synthase (237 aa).

This sequence belongs to the SAICAR synthetase family.

The enzyme catalyses 5-amino-1-(5-phospho-D-ribosyl)imidazole-4-carboxylate + L-aspartate + ATP = (2S)-2-[5-amino-1-(5-phospho-beta-D-ribosyl)imidazole-4-carboxamido]succinate + ADP + phosphate + 2 H(+). It functions in the pathway purine metabolism; IMP biosynthesis via de novo pathway; 5-amino-1-(5-phospho-D-ribosyl)imidazole-4-carboxamide from 5-amino-1-(5-phospho-D-ribosyl)imidazole-4-carboxylate: step 1/2. This is Phosphoribosylaminoimidazole-succinocarboxamide synthase from Erwinia tasmaniensis (strain DSM 17950 / CFBP 7177 / CIP 109463 / NCPPB 4357 / Et1/99).